Here is a 337-residue protein sequence, read N- to C-terminus: Cathepsin L-like (337 aa).

Positions 1–18 (MNRFILLALVAAVVAVNS) are cleaved as a signal peptide. A propeptide spans 19–119 (AKLSRQIESA…SSFLAPFNVQ (101 aa)) (activation peptide). N-linked (GlcNAc...) asparagine glycosylation occurs at asparagine 108. Intrachain disulfides connect cysteine 141–cysteine 184, cysteine 175–cysteine 217, and cysteine 276–cysteine 326. Cysteine 144 is an active-site residue. Catalysis depends on residues histidine 283 and asparagine 304.

It belongs to the peptidase C1 family. In terms of tissue distribution, expressed in intestine, pharynx posterior bulb, hypodermis and cuticle (at protein level). Expressed in germ cells, developing oocytes, sheath cells surrounding germ cells and oocytes, and in the eggshell (at protein level).

Its subcellular location is the secreted. It localises to the cytoplasmic granule. The protein localises to the lysosome. The protein resides in the endosome. It is found in the cytoplasmic vesicle. Its subcellular location is the phagosome. It catalyses the reaction Specificity close to that of papain. As compared to cathepsin B, cathepsin L exhibits higher activity toward protein substrates, but has little activity on Z-Arg-Arg-NHMec, and no peptidyl-dipeptidase activity.. Functionally, cysteine protease which plays an essential role in the degradation of proteins in lysosomes. During early embryogenesis, maternally required for the proteolytic processing of yolk proteins in platelets, a lysosome-like structure where a slow and controlled degradation of yolk proteins occurs. In the gonad, required for the clearance of apoptotic germ cells in the engulfing cell phagolysosomes. In embryos, required for the degradation of endocytic and autophagic cargos. In embryos, may play a role in the degradation of lipid-containing droplets. Required for larval development. The polypeptide is Cathepsin L-like (Caenorhabditis elegans).